A 351-amino-acid chain; its full sequence is D-alanine--D-alanine ligase (351 aa).

The ATP-grasp domain maps to asparagine 135–glutamate 343. Leucine 167–serine 222 contacts ATP. Residues aspartate 298, glutamate 310, and asparagine 312 each contribute to the Mg(2+) site.

It belongs to the D-alanine--D-alanine ligase family. Mg(2+) is required as a cofactor. The cofactor is Mn(2+).

The protein resides in the cytoplasm. The catalysed reaction is 2 D-alanine + ATP = D-alanyl-D-alanine + ADP + phosphate + H(+). Its pathway is cell wall biogenesis; peptidoglycan biosynthesis. In terms of biological role, cell wall formation. This chain is D-alanine--D-alanine ligase, found in Leptospira interrogans serogroup Icterohaemorrhagiae serovar copenhageni (strain Fiocruz L1-130).